The chain runs to 364 residues: MSSHAPASSFSVSGLLAYCRAGFEKELAAEIDDLAADAGLIGYVRTEPGSGYAAFETFEPVPVIKLGEFADWRKPVFARQLLPWFDRIDDLPERDRARPLVDMVKGSGQRFSGVVLETPDTDEAKQRSGFCRRFTEPLTRELEKVGALRLGKPGFPVLHVMFPTATSAWLAAGLKDRCAPWPMGIPRLRMPSNAPSRSTLKLAEAIMTLLSDEERDSLLRAGMRAVDLGAAPGGWTWQLAQRGIRVTAIDNGPLRDTVMATEMVEHLKADGFTWRPQRPVDWMVCDMVEQPSRIASLMAEWIATGRCRHTIFNLKLPMKRRLEAVEQCRELIRKRLASIGPFDLRIKQLYHDREEVTAYLTLKK.

S-adenosyl-L-methionine contacts are provided by residues S198, 231 to 234 (APGG), D250, D270, and D286. The Proton acceptor role is filled by K315.

This sequence belongs to the class I-like SAM-binding methyltransferase superfamily. RNA methyltransferase RlmE family. RlmM subfamily. In terms of assembly, monomer.

It is found in the cytoplasm. The catalysed reaction is cytidine(2498) in 23S rRNA + S-adenosyl-L-methionine = 2'-O-methylcytidine(2498) in 23S rRNA + S-adenosyl-L-homocysteine + H(+). Its function is as follows. Catalyzes the 2'-O-methylation at nucleotide C2498 in 23S rRNA. This is Ribosomal RNA large subunit methyltransferase M from Azoarcus sp. (strain BH72).